Here is a 188-residue protein sequence, read N- to C-terminus: Elongation factor P (188 aa).

Lys34 carries the N6-(3,6-diaminohexanoyl)-5-hydroxylysine modification.

The protein belongs to the elongation factor P family. Post-translationally, may be beta-lysylated on the epsilon-amino group of Lys-34 by the combined action of EpmA and EpmB, and then hydroxylated on the C5 position of the same residue by EpmC (if this protein is present). Lysylation is critical for the stimulatory effect of EF-P on peptide-bond formation. The lysylation moiety may extend toward the peptidyltransferase center and stabilize the terminal 3-CCA end of the tRNA. Hydroxylation of the C5 position on Lys-34 may allow additional potential stabilizing hydrogen-bond interactions with the P-tRNA.

The protein resides in the cytoplasm. It functions in the pathway protein biosynthesis; polypeptide chain elongation. Functionally, involved in peptide bond synthesis. Alleviates ribosome stalling that occurs when 3 or more consecutive Pro residues or the sequence PPG is present in a protein, possibly by augmenting the peptidyl transferase activity of the ribosome. Modification of Lys-34 is required for alleviation. The polypeptide is Elongation factor P (Vibrio campbellii (strain ATCC BAA-1116)).